The following is a 117-amino-acid chain: Large ribosomal subunit protein uL18 (117 aa).

The protein belongs to the universal ribosomal protein uL18 family. In terms of assembly, part of the 50S ribosomal subunit; part of the 5S rRNA/L5/L18/L25 subcomplex. Contacts the 5S and 23S rRNAs.

Functionally, this is one of the proteins that bind and probably mediate the attachment of the 5S RNA into the large ribosomal subunit, where it forms part of the central protuberance. The polypeptide is Large ribosomal subunit protein uL18 (Mycoplasma mobile (strain ATCC 43663 / 163K / NCTC 11711) (Mesomycoplasma mobile)).